The following is a 204-amino-acid chain: ATP synthase subunit b 2 (204 aa).

Residues 50–70 (IFWLAVTFGLLLFLMSKVALP) form a helical membrane-spanning segment.

Belongs to the ATPase B chain family. As to quaternary structure, F-type ATPases have 2 components, F(1) - the catalytic core - and F(0) - the membrane proton channel. F(1) has five subunits: alpha(3), beta(3), gamma(1), delta(1), epsilon(1). F(0) has three main subunits: a(1), b(2) and c(10-14). The alpha and beta chains form an alternating ring which encloses part of the gamma chain. F(1) is attached to F(0) by a central stalk formed by the gamma and epsilon chains, while a peripheral stalk is formed by the delta and b chains.

The protein resides in the cell inner membrane. In terms of biological role, f(1)F(0) ATP synthase produces ATP from ADP in the presence of a proton or sodium gradient. F-type ATPases consist of two structural domains, F(1) containing the extramembraneous catalytic core and F(0) containing the membrane proton channel, linked together by a central stalk and a peripheral stalk. During catalysis, ATP synthesis in the catalytic domain of F(1) is coupled via a rotary mechanism of the central stalk subunits to proton translocation. Its function is as follows. Component of the F(0) channel, it forms part of the peripheral stalk, linking F(1) to F(0). The b'-subunit is a diverged and duplicated form of b found in plants and photosynthetic bacteria. The chain is ATP synthase subunit b 2 (atpF2) from Rhodospirillum centenum (strain ATCC 51521 / SW).